Consider the following 648-residue polypeptide: Biosynthetic arginine decarboxylase (648 aa).

Residue lysine 109 is modified to N6-(pyridoxal phosphate)lysine. 291–301 (LDVGGGLGVDY) contributes to the substrate binding site.

This sequence belongs to the Orn/Lys/Arg decarboxylase class-II family. SpeA subfamily. It depends on Mg(2+) as a cofactor. Pyridoxal 5'-phosphate is required as a cofactor.

It carries out the reaction L-arginine + H(+) = agmatine + CO2. Functionally, catalyzes the biosynthesis of agmatine from arginine. This is Biosynthetic arginine decarboxylase from Prochlorococcus marinus (strain SARG / CCMP1375 / SS120).